The chain runs to 393 residues: Phosphopentomutase (393 aa).

Asp13, Asp286, His291, Asp327, His328, and His339 together coordinate Mn(2+).

The protein belongs to the phosphopentomutase family. Mn(2+) serves as cofactor.

The protein resides in the cytoplasm. It carries out the reaction 2-deoxy-alpha-D-ribose 1-phosphate = 2-deoxy-D-ribose 5-phosphate. The catalysed reaction is alpha-D-ribose 1-phosphate = D-ribose 5-phosphate. It functions in the pathway carbohydrate degradation; 2-deoxy-D-ribose 1-phosphate degradation; D-glyceraldehyde 3-phosphate and acetaldehyde from 2-deoxy-alpha-D-ribose 1-phosphate: step 1/2. Isomerase that catalyzes the conversion of deoxy-ribose 1-phosphate (dRib-1-P) and ribose 1-phosphate (Rib-1-P) to deoxy-ribose 5-phosphate (dRib-5-P) and ribose 5-phosphate (Rib-5-P), respectively. The polypeptide is Phosphopentomutase (Symbiobacterium thermophilum (strain DSM 24528 / JCM 14929 / IAM 14863 / T)).